The sequence spans 261 residues: 1-(5-phosphoribosyl)-5-[(5-phosphoribosylamino)methylideneamino] imidazole-4-carboxamide isomerase (261 aa).

The protein belongs to the HisA/HisF family.

Its subcellular location is the cytoplasm. The enzyme catalyses 1-(5-phospho-beta-D-ribosyl)-5-[(5-phospho-beta-D-ribosylamino)methylideneamino]imidazole-4-carboxamide = 5-[(5-phospho-1-deoxy-D-ribulos-1-ylimino)methylamino]-1-(5-phospho-beta-D-ribosyl)imidazole-4-carboxamide. It participates in amino-acid biosynthesis; L-histidine biosynthesis; L-histidine from 5-phospho-alpha-D-ribose 1-diphosphate: step 4/9. Its function is as follows. Catalyzes the isomerization of the aminoaldose moiety of ProFAR to the aminoketose of PRFAR. In Saccharomyces cerevisiae (strain ATCC 204508 / S288c) (Baker's yeast), this protein is 1-(5-phosphoribosyl)-5-[(5-phosphoribosylamino)methylideneamino] imidazole-4-carboxamide isomerase.